The sequence spans 176 residues: Large ribosomal subunit protein uL10 (176 aa).

The protein belongs to the universal ribosomal protein uL10 family. As to quaternary structure, part of the ribosomal stalk of the 50S ribosomal subunit. The N-terminus interacts with L11 and the large rRNA to form the base of the stalk. The C-terminus forms an elongated spine to which L12 dimers bind in a sequential fashion forming a multimeric L10(L12)X complex.

Forms part of the ribosomal stalk, playing a central role in the interaction of the ribosome with GTP-bound translation factors. This is Large ribosomal subunit protein uL10 (rplJ) from Streptomyces coelicolor (strain ATCC BAA-471 / A3(2) / M145).